Consider the following 398-residue polypeptide: Meiotically up-regulated gene 126 protein (398 aa).

Disordered regions lie at residues 30–81 (EEME…QRHR) and 119–260 (FESD…NSNS). Polar residues-rich tracts occupy residues 119 to 135 (FESD…NFPT) and 183 to 199 (VQEN…QEPQ). A compositionally biased stretch (low complexity) spans 210–222 (QANQQETSSNQEE). Positions 224–236 (SFDRQETQDDKQK) are enriched in basic and acidic residues. The segment covering 248–260 (RNRNQATITNSNS) has biased composition (polar residues). The next 4 membrane-spanning stretches (helical) occupy residues 269–289 (IFVI…DLIE), 305–325 (IFLW…YLAL), 341–361 (GACF…CFLI), and 373–393 (LEIY…GAIY).

The protein resides in the membrane. Its function is as follows. Has a role in meiosis. This chain is Meiotically up-regulated gene 126 protein (mug126), found in Schizosaccharomyces pombe (strain 972 / ATCC 24843) (Fission yeast).